A 137-amino-acid chain; its full sequence is ATP synthase epsilon chain, chloroplastic (137 aa).

It belongs to the ATPase epsilon chain family. As to quaternary structure, F-type ATPases have 2 components, CF(1) - the catalytic core - and CF(0) - the membrane proton channel. CF(1) has five subunits: alpha(3), beta(3), gamma(1), delta(1), epsilon(1). CF(0) has three main subunits: a, b and c.

It localises to the plastid. The protein localises to the chloroplast thylakoid membrane. In terms of biological role, produces ATP from ADP in the presence of a proton gradient across the membrane. This is ATP synthase epsilon chain, chloroplastic from Hordeum vulgare (Barley).